The chain runs to 401 residues: 8-amino-7-oxononanoate synthase (401 aa).

R19 serves as a coordination point for substrate. Position 106–107 (G106–Y107) interacts with pyridoxal 5'-phosphate. H131 serves as a coordination point for substrate. Residues S176, H204, and T233 each coordinate pyridoxal 5'-phosphate. An N6-(pyridoxal phosphate)lysine modification is found at K236. Residue T350 participates in substrate binding.

It belongs to the class-II pyridoxal-phosphate-dependent aminotransferase family. BioF subfamily. As to quaternary structure, homodimer. Pyridoxal 5'-phosphate serves as cofactor.

The catalysed reaction is 6-carboxyhexanoyl-[ACP] + L-alanine + H(+) = (8S)-8-amino-7-oxononanoate + holo-[ACP] + CO2. It functions in the pathway cofactor biosynthesis; biotin biosynthesis. In terms of biological role, catalyzes the decarboxylative condensation of pimeloyl-[acyl-carrier protein] and L-alanine to produce 8-amino-7-oxononanoate (AON), [acyl-carrier protein], and carbon dioxide. This Pseudomonas paraeruginosa (strain DSM 24068 / PA7) (Pseudomonas aeruginosa (strain PA7)) protein is 8-amino-7-oxononanoate synthase.